The sequence spans 523 residues: Sialate O-acetylesterase (523 aa).

The first 23 residues, 1–23, serve as a signal peptide directing secretion; the sequence is MVAPGLVLGLVLPLILWADRSAG. N-linked (GlcNAc...) asparagine glycosylation is found at N107, N138, N267, N290, N401, and N422.

Its subcellular location is the lysosome. The catalysed reaction is N-acetyl-9-O-acetylneuraminate + H2O = N-acetylneuraminate + acetate + H(+). It carries out the reaction an Ac-O-9-sialoglycoconjugate + H2O = a sialoglycoconjugate + acetate + H(+). In terms of biological role, catalyzes the removal of O-acetyl ester groups from position 9 of the free diacetylated sialate N-acetyl-9-O-acetylneuraminate (Neu5,9Ac2) in the cytosol and of the diacetylated sialate residues of sialylglycoconjugates in the lysosomes. Together with the sialate-O-acetyltransferase they regulate the balance of acetylated sialoglycoconjugates, key players in various processes such as cell-cell interactions, host-pathogen recognition, and tumor antigenicity. The chain is Sialate O-acetylesterase (SIAE) from Pongo abelii (Sumatran orangutan).